Reading from the N-terminus, the 626-residue chain is Methanol dehydrogenase [cytochrome c] subunit 1 (626 aa).

The signal sequence occupies residues 1–27; the sequence is MSRFVTSVSALAMLALAPAALSSVAYA. A disulfide bond links cysteine 130 and cysteine 131. Positions 204 and 288 each coordinate Ca(2+). Aspartate 330 (proton acceptor) is an active-site residue. Cysteine 413 and cysteine 442 are disulfide-bonded.

This sequence belongs to the bacterial PQQ dehydrogenase family. As to quaternary structure, heterotetramer composed of 2 alpha and 2 beta subunits. Pyrroloquinoline quinone is required as a cofactor. It depends on Ca(2+) as a cofactor.

It is found in the cell inner membrane. It carries out the reaction 2 Fe(III)-[cytochrome cL] + a primary alcohol = 2 Fe(II)-[cytochrome cL] + an aldehyde + 2 H(+). Functionally, catalyzes the oxidation of primary alcohols including methanol. This is Methanol dehydrogenase [cytochrome c] subunit 1 (moxF) from Methylobacterium organophilum.